A 94-amino-acid polypeptide reads, in one-letter code: Acylphosphatase (94 aa).

Positions R7–D94 constitute an Acylphosphatase-like domain. Active-site residues include R22 and N40.

This sequence belongs to the acylphosphatase family.

It carries out the reaction an acyl phosphate + H2O = a carboxylate + phosphate + H(+). The protein is Acylphosphatase (acyP) of Paenarthrobacter aurescens (strain TC1).